Here is a 331-residue protein sequence, read N- to C-terminus: GTP-binding protein RHO5 (331 aa).

10–17 (GDGAVGKT) contacts GTP. Residues 51–76 (ASSPLELDNGNDKRGSLSSASSSPST) are disordered. Low complexity predominate over residues 66-75 (SLSSASSSPS). Residues 87 to 91 (DTAGQ) and 156 to 159 (TKSD) each bind GTP. Residues S223 and S228 each carry the phosphoserine modification. A phosphothreonine mark is found at T232 and T244. Positions 239 to 331 (TATTNTNGDK…KKKKSKCVIL (93 aa)) are disordered. Positions 258 to 273 (HHNNSTDSTLPKGSLQ) are enriched in polar residues. K276 participates in a covalent cross-link: Glycyl lysine isopeptide (Lys-Gly) (interchain with G-Cter in ubiquitin). A compositionally biased stretch (basic and acidic residues) spans 287-297 (GQKDKIHEQSK). Basic residues predominate over residues 308–331 (HHNKQAKPKTRNDKKKKKSKCVIL). C328 is subject to Cysteine methyl ester. The S-geranylgeranyl cysteine moiety is linked to residue C328. The propeptide at 329-331 (VIL) is removed in mature form.

It belongs to the small GTPase superfamily. Rho family. In terms of assembly, interacts with RGD2.

The protein localises to the membrane. Its subcellular location is the mitochondrion. Small GTPase that negatively regulates a MAP kinase branch, downstream of SLT2, of the PKC1-mediated signal transduction pathway. With its specific guanine nucleotide exchange factor (GEF), the heterodimeric complex DCK1/LMO1, relocates to mitochondria upon oxidative stress and triggers cell death. The DCK1/LMO1/RHO5 signaling module that mediates mitochondrial turnover under nitrogen starvation conditions via mitophagy. The DCK1/LMO1/RHO5 signaling module also plays a role in cell wall integrity signaling. The chain is GTP-binding protein RHO5 from Saccharomyces cerevisiae (strain ATCC 204508 / S288c) (Baker's yeast).